The primary structure comprises 496 residues: Versicolorin B desaturase stcL (496 aa).

A helical transmembrane segment spans residues 3–23 (FLSLPILTALGAVVYVLFQLV). Cys440 lines the heme pocket.

The protein belongs to the cytochrome P450 family. Requires heme as cofactor.

It localises to the membrane. It catalyses the reaction versicolorin B + NADPH + O2 + H(+) = versicolorin A + NADP(+) + 2 H2O. It participates in mycotoxin biosynthesis; sterigmatocystin biosynthesis. In terms of biological role, cytochrome P450 monooxygenase; part of the gene cluster that mediates the biosynthesis of sterigmatocystin (ST), a polyketide-derived furanocoumarin which is part of the most toxic and carcinogenic compounds among the known mycotoxins. The first step in the biosynthesis of sterigmatocystin is the production of hexanoate by the fatty acid synthase (FAS) units stcJ and stcK. The polyketide backbone is assembled by the non-reducing polyketide synthase stcA by condensation of the starter hexanoyl-CoA and 7 malonyl-CoA extender units followed by cyclization and release of norsolorinic acid. Norsolorinic acid is the first stable intermediate in the biosynthesis of sterigmatocystin and is converted into averantin (AVN) by the ketoreductase stcE which reduces the hexanoate ketone to an alcohol. Averantin is then oxidized into 5'-hydroxyaverantin (HAVN) by the cytochrome P450 monooxygenase stcF. 5'-hydroxyaverantin is further converted to 5'-oxyaverantin (OAVN) by the 5'-hydroxyaverantin dehydrogenase stcG. The next step is the conversion of OAVN into averufin (AVF) which is catalyzed by a yet to be identified enzyme. The cytochrome P450 monooxygenase stcB and the flavin-binding monooxygenase stcW are both required for the conversion of averufin to 1-hydroxyversicolorone. The esterase stcI probably catalyzes the formation of versiconal hemiacetal acetate from 1-hydroxyversicolorone. The oxydoreductase stcN then probably catalyzes the biosynthetic step from versiconal to versicolorin B (VERB). The next step is performed by the versicolorin B desaturase stcL to produce versicolorin A (VERA). The ketoreductase stcU and the cytochrome P450 monooxygenase stcS are involved in the conversion of versicolorin A to demethylsterigmatocystin. The Baeyer-Villiger oxidas stcQ and the reductase stcR might be involved in the biosynthetic step from versicolorin A to demethylsterigmatocystin. The final step in the biosynthesis of sterigmatocystin is the methylation of demethylsterigmatocystin catalyzed by the methyltransferase stcP. This chain is Versicolorin B desaturase stcL, found in Emericella nidulans (strain FGSC A4 / ATCC 38163 / CBS 112.46 / NRRL 194 / M139) (Aspergillus nidulans).